Consider the following 136-residue polypeptide: Small ribosomal subunit protein eS6 (136 aa).

Belongs to the eukaryotic ribosomal protein eS6 family.

This chain is Small ribosomal subunit protein eS6, found in Methanosarcina acetivorans (strain ATCC 35395 / DSM 2834 / JCM 12185 / C2A).